The following is a 1325-amino-acid chain: ATP-binding cassette sub-family C member 4 (1325 aa).

6 helical membrane-spanning segments follow: residues 93–113 (LILG…PLFL), 136–156 (GYAA…HLYF), 205–225 (FDQV…AIAV), 227–247 (VLLW…LVIL), 322–342 (ASFF…YVLL), and 351–371 (VFVA…FFPS). Residues 93-377 (LILGIFTLIE…FFPSAIERGS (285 aa)) form the ABC transmembrane type-1 1 domain. Positions 410–633 (VHVQDFTAFW…GVDFGSLLKK (224 aa)) constitute an ABC transporter 1 domain. 445-452 (GPVGAGKS) lines the ATP pocket. A phosphothreonine mark is found at Thr646 and Thr648. Positions 657–667 (ASIWSQQSSRP) are enriched in polar residues. A disordered region spans residues 657-690 (ASIWSQQSSRPSLKDGAPEGQDAENTQAVQPEES). Residues Ser664 and Ser668 each carry the phosphoserine modification. Transmembrane regions (helical) follow at residues 710 to 730 (SWFF…FYVL), 761 to 781 (LSWY…FGIA), 849 to 869 (LVVS…IPLV), 954 to 974 (AICA…AKTL), and 977 to 997 (GQVG…QWSV). Positions 714-1005 (IIFLVLLNMV…SVRQSAEVEN (292 aa)) constitute an ABC transmembrane type-1 2 domain. Residues 1041 to 1274 (IVFDNVNFTY…PESLFYKMVQ (234 aa)) form the ABC transporter 2 domain. 1075 to 1082 (GRTGAGKS) provides a ligand contact to ATP. Residues 1322–1325 (ETAL) carry the PDZ-binding motif.

As to quaternary structure, interacts (via PDZ-binding motif) with SNX27 (via PDZ domain); this interaction accelerates MRP4 internalization. The cofactor is Mg(2+). N-glycosylated; leading to substrate-selective effects on its transport activity.

The protein resides in the basolateral cell membrane. Its subcellular location is the apical cell membrane. The enzyme catalyses ATP + H2O + xenobioticSide 1 = ADP + phosphate + xenobioticSide 2.. It catalyses the reaction an S-substituted glutathione(in) + ATP + H2O = an S-substituted glutathione(out) + ADP + phosphate + H(+). It carries out the reaction 17beta-estradiol 17-O-(beta-D-glucuronate)(in) + ATP + H2O = 17beta-estradiol 17-O-(beta-D-glucuronate)(out) + ADP + phosphate + H(+). The catalysed reaction is dehydroepiandrosterone 3-sulfate(in) + ATP + H2O = dehydroepiandrosterone 3-sulfate(out) + ADP + phosphate + H(+). The enzyme catalyses leukotriene C4(in) + ATP + H2O = leukotriene C4(out) + ADP + phosphate + H(+). It catalyses the reaction leukotriene B4(in) + ATP + H2O = leukotriene B4(out) + ADP + phosphate + H(+). It carries out the reaction urate(in) + ATP + H2O = urate(out) + ADP + phosphate + H(+). The catalysed reaction is 3',5'-cyclic GMP(in) + ATP + H2O = 3',5'-cyclic GMP(out) + ADP + phosphate + H(+). The enzyme catalyses 3',5'-cyclic AMP(in) + ATP + H2O = 3',5'-cyclic AMP(out) + ADP + phosphate + H(+). It catalyses the reaction prostaglandin E2(in) + ATP + H2O = prostaglandin E2(out) + ADP + phosphate + H(+). It carries out the reaction prostaglandin E1(in) + ATP + H2O = prostaglandin E1(out) + ADP + phosphate + H(+). The catalysed reaction is glycodeoxycholate(in) + glutathione(in) + ATP + H2O = glycodeoxycholate(out) + glutathione(out) + ADP + phosphate + H(+). The enzyme catalyses cholate(in) + glutathione(in) + ATP + H2O = cholate(out) + glutathione(out) + ADP + phosphate + H(+). It catalyses the reaction glycocholate(in) + glutathione(in) + ATP + H2O = glycocholate(out) + glutathione(out) + ADP + phosphate + H(+). It carries out the reaction taurocholate(in) + glutathione(in) + ATP + H2O = taurocholate(out) + glutathione(out) + ADP + phosphate + H(+). The catalysed reaction is glycochenodeoxycholate(in) + glutathione(in) + ATP + H2O = glycochenodeoxycholate(out) + glutathione(out) + ADP + phosphate + H(+). The enzyme catalyses taurochenodeoxycholate(in) + glutathione(in) + ATP + H2O = taurochenodeoxycholate(out) + glutathione(out) + ADP + phosphate + H(+). It catalyses the reaction glycoursodeoxycholate(in) + glutathione(in) + ATP + H2O = glycoursodeoxycholate(out) + glutathione(out) + ADP + phosphate + H(+). It carries out the reaction tauroursodeoxycholate(in) + glutathione(in) + ATP + H2O = tauroursodeoxycholate(out) + glutathione(out) + ADP + phosphate + H(+). Its function is as follows. ATP-dependent transporter of the ATP-binding cassette (ABC) family that actively extrudes physiological compounds and xenobiotics from cells. Transports a range of endogenous molecules that have a key role in cellular communication and signaling, including cyclic nucleotides such as cyclic AMP (cAMP) and cyclic GMP (cGMP), bile acids, steroid conjugates, urate, and prostaglandins. Also mediates the ATP-dependent efflux of glutathione conjugates such as leukotriene C4 (LTC4) and leukotriene B4 (LTB4). The presence of GSH is necessary for the ATP-dependent transport of LTB4, whereas GSH is not required for the transport of LTC4. Mediates the cotransport of bile acids with reduced glutathione (GSH). Transports a wide range of drugs and their metabolites, including anticancer, antiviral and antibiotics molecules. Confers resistance to anticancer agents. This is ATP-binding cassette sub-family C member 4 from Mus musculus (Mouse).